A 118-amino-acid polypeptide reads, in one-letter code: MRIKNGVWARKRHKKWLKLAKGYWGAKSRVFKQAHIAVMRSLRYAYIGRRLKKRDFRRLWITRINAAARQNGLSYSKFINGLKKAGISLNRKVLADMAINDQKAFAELVEIAKKQING.

The protein belongs to the bacterial ribosomal protein bL20 family.

Binds directly to 23S ribosomal RNA and is necessary for the in vitro assembly process of the 50S ribosomal subunit. It is not involved in the protein synthesizing functions of that subunit. This Caldicellulosiruptor saccharolyticus (strain ATCC 43494 / DSM 8903 / Tp8T 6331) protein is Large ribosomal subunit protein bL20.